Reading from the N-terminus, the 177-residue chain is Dynein light chain Tctex-type 5-A (177 aa).

Belongs to the dynein light chain Tctex-type family.

The sequence is that of Dynein light chain Tctex-type 5-A (Dynlt5-a) from Xenopus laevis (African clawed frog).